A 60-amino-acid chain; its full sequence is Transcriptional regulatory protein SenN (60 aa).

Positions Arg-11–Lys-31 form a DNA-binding region, H-T-H motif.

The protein to B.subtilis SenS.

Regulates the expression of extracellular-protein genes of Bacillus natto. This chain is Transcriptional regulatory protein SenN (senN), found in Bacillus subtilis subsp. natto.